The chain runs to 624 residues: Ceramide transfer protein (624 aa).

A compositionally biased stretch (polar residues) spans 1–11; sequence MSDNQSWNSSG. Residues 1–24 are disordered; sequence MSDNQSWNSSGSEEDPETESGPPV. Residues 23-117 enclose the PH domain; the sequence is PVERCGVLSK…WIDAIEQHKT (95 aa). Serine 126 carries the phosphoserine modification. Serine 132 is modified (phosphoserine; by PKD). Residue serine 135 is modified to Phosphoserine. Positions 263 to 303 form a coiled coil; sequence IELMVKREDSWQKRLDKETEKKRRTEEAYKNAMTELKKKSH. Position 315 is a phosphoserine (serine 315). Residues 321-327 carry the FFAT motif; that stretch reads EFFDAVE. Phosphotyrosine is present on tyrosine 372. Phosphoserine occurs at positions 373, 377, and 380. In terms of domain architecture, START spans 389 to 618; the sequence is DVHRFSSQVE…FTSYVQEKTA (230 aa). Positions 472, 493, 530, and 579 each coordinate an N-acylsphing-4-enine.

In terms of assembly, interacts with VAPA and VAPB. Interaction with VAPB is less efficient than with VAPA. Interacts (via FFAT motif) with the MOSPD2 (via MSP domain). Post-translationally, phosphorylation on Ser-132 decreases the affinity toward phosphatidylinositol 4-phosphate at Golgi membranes and reduces ceramide transfer activity. Inactivated by hyperphosphorylation of serine residues by CSNK1G2/CK1 that triggers dissociation from the Golgi complex, thus down-regulating ER-to-Golgi transport of ceramide and sphingomyelin synthesis.

The protein resides in the cytoplasm. The protein localises to the golgi apparatus. Its subcellular location is the endoplasmic reticulum. The catalysed reaction is N-hexadecanoylsphing-4-enine(in) = N-hexadecanoylsphing-4-enine(out). Functionally, shelters ceramides and diacylglycerol lipids inside its START domain and mediates the intracellular trafficking of ceramides and diacylglycerol lipids in a non-vesicular manner. The sequence is that of Ceramide transfer protein (CERT1) from Pongo abelii (Sumatran orangutan).